A 236-amino-acid polypeptide reads, in one-letter code: MTDFLPAFWAVIPAAGIGARMAADRPKQYLQLGGLTILEHSLLCFLDHPRLKGLVISLAVDDPYWAALPCAHDSRIQRVDGGRERSGSVLNALLHLHAQGASDDDWVLVHDAARPNLARSDLDNLLGQLADDPVGGLLAVPARDTLKRADSDGRVVETVDRSLIWQAFTPQMFRLGTLHRALADSLVSNVSITDEASAIEWAGQSPRLIEGRSDNIKVTRPEDLEWLRQRRSEFGR.

Belongs to the IspD/TarI cytidylyltransferase family. IspD subfamily.

The catalysed reaction is 2-C-methyl-D-erythritol 4-phosphate + CTP + H(+) = 4-CDP-2-C-methyl-D-erythritol + diphosphate. Its pathway is isoprenoid biosynthesis; isopentenyl diphosphate biosynthesis via DXP pathway; isopentenyl diphosphate from 1-deoxy-D-xylulose 5-phosphate: step 2/6. Functionally, catalyzes the formation of 4-diphosphocytidyl-2-C-methyl-D-erythritol from CTP and 2-C-methyl-D-erythritol 4-phosphate (MEP). The chain is 2-C-methyl-D-erythritol 4-phosphate cytidylyltransferase from Pseudomonas syringae pv. tomato (strain ATCC BAA-871 / DC3000).